The sequence spans 276 residues: Putative translation initiation factor eIF-2B subunit 2-like (276 aa).

Belongs to the eIF-2B alpha/beta/delta subunits family. As to quaternary structure, complex of two different subunits.

In terms of biological role, catalyzes the exchange of initiation factor 2-bound GDP for GTP. This Pyrococcus abyssi (strain GE5 / Orsay) protein is Putative translation initiation factor eIF-2B subunit 2-like.